Reading from the N-terminus, the 419-residue chain is UDP-N-acetylglucosamine 1-carboxyvinyltransferase 2 (419 aa).

24 to 25 is a phosphoenolpyruvate binding site; the sequence is KN. R94 is a UDP-N-acetyl-alpha-D-glucosamine binding site. C118 acts as the Proton donor in catalysis. Position 118 is a 2-(S-cysteinyl)pyruvic acid O-phosphothioketal (C118). Residues 123–127, D307, and I329 each bind UDP-N-acetyl-alpha-D-glucosamine; that span reads RPIDQ.

The protein belongs to the EPSP synthase family. MurA subfamily.

The protein localises to the cytoplasm. It carries out the reaction phosphoenolpyruvate + UDP-N-acetyl-alpha-D-glucosamine = UDP-N-acetyl-3-O-(1-carboxyvinyl)-alpha-D-glucosamine + phosphate. It participates in cell wall biogenesis; peptidoglycan biosynthesis. Its function is as follows. Cell wall formation. Adds enolpyruvyl to UDP-N-acetylglucosamine. The chain is UDP-N-acetylglucosamine 1-carboxyvinyltransferase 2 from Staphylococcus aureus (strain MRSA252).